A 462-amino-acid chain; its full sequence is Indoleacetamide hydrolase (462 aa).

Residues K74 and S149 each act as charge relay system in the active site. S173 functions as the Acyl-ester intermediate in the catalytic mechanism.

Belongs to the amidase family.

Its pathway is plant hormone metabolism; auxin biosynthesis. In terms of biological role, hydrolyzes indole-3-acetamide (IAM) into indole-3-acetic acid (IAA). The sequence is that of Indoleacetamide hydrolase (iaaH) from Allorhizobium ampelinum (strain ATCC BAA-846 / DSM 112012 / S4) (Agrobacterium vitis (strain S4)).